Reading from the N-terminus, the 295-residue chain is 4-diphosphocytidyl-2-C-methyl-D-erythritol kinase (295 aa).

Lys-22 is an active-site residue. Residue 106 to 116 (PAGGGFGGGSS) coordinates ATP. Residue Asp-148 is part of the active site.

This sequence belongs to the GHMP kinase family. IspE subfamily.

The catalysed reaction is 4-CDP-2-C-methyl-D-erythritol + ATP = 4-CDP-2-C-methyl-D-erythritol 2-phosphate + ADP + H(+). It functions in the pathway isoprenoid biosynthesis; isopentenyl diphosphate biosynthesis via DXP pathway; isopentenyl diphosphate from 1-deoxy-D-xylulose 5-phosphate: step 3/6. Its function is as follows. Catalyzes the phosphorylation of the position 2 hydroxy group of 4-diphosphocytidyl-2C-methyl-D-erythritol. The protein is 4-diphosphocytidyl-2-C-methyl-D-erythritol kinase of Xanthomonas axonopodis pv. citri (strain 306).